The chain runs to 80 residues: Protein KorB (80 aa).

DNA-binding regions (H-T-H motif) lie at residues 13-32 (AEAA…AELD) and 56-75 (NEVT…AEAE).

Its function is as follows. Repressor for the transcription of certain pIJ101 promoters, including those the from kilA and kilB loci. The chain is Protein KorB (korB) from Streptomyces lividans.